The following is a 229-amino-acid chain: MLCCCVNSENNKKYAELDAKLARKMVESRSIYPGHRSLKSMDSIIMKFPKLREGLRNIRSVFESYDNDTNGTIDIEELKKCLEELKLSLSDEEVKGLYSWCDVDGSKGIQFNEFIVLLCLIYLLAKPSSESSTESREMGPKLVESIFDPIVEVFLFLDKDGKGKLNKADVIKTLNNEDYPLERSPSHVTNMRFEEMDWGRKGKVGFREFLFAFMSWVGLDDADDDFMSS.

EF-hand domains lie at 53-88 (EGLR…LKLS), 89-124 (LSDE…IYLL), 145-180 (SIFD…EDYP), and 184-219 (SPSH…WVGL). Residues D66, D68, N70, T72, and E77 each coordinate Ca(2+).

In terms of biological role, potential calcium sensor. This Arabidopsis thaliana (Mouse-ear cress) protein is Probable calcium-binding protein CML22 (CML22).